Consider the following 185-residue polypeptide: Protein FAM219A (185 aa).

An N-acetylmethionine modification is found at M1. Residues 1–131 (MMEEIDRFQV…SRYSSSGYSS (131 aa)) form a disordered region. S47 carries the post-translational modification Phosphoserine. Basic and acidic residues predominate over residues 52–61 (KLEKQRELAR). Polar residues predominate over residues 66–80 (KNGSMGSPVNQQPKK). 2 positions are modified to phosphoserine: S72 and S102. T113 carries the phosphothreonine modification. Residues S115 and S122 each carry the phosphoserine modification. Low complexity predominate over residues 122–131 (SRYSSSGYSS).

It belongs to the FAM219 family.

The sequence is that of Protein FAM219A (FAM219A) from Homo sapiens (Human).